Here is a 149-residue protein sequence, read N- to C-terminus: Putative pre-16S rRNA nuclease (149 aa).

It belongs to the YqgF nuclease family.

It is found in the cytoplasm. Could be a nuclease involved in processing of the 5'-end of pre-16S rRNA. This is Putative pre-16S rRNA nuclease from Burkholderia multivorans (strain ATCC 17616 / 249).